Here is a 430-residue protein sequence, read N- to C-terminus: Cysteate synthase (430 aa).

Lys-106 carries the N6-(pyridoxal phosphate)lysine modification. Asn-132 and Thr-381 together coordinate pyridoxal 5'-phosphate.

This sequence belongs to the threonine synthase family. Cysteate synthase subfamily. Homotrimer. It depends on pyridoxal 5'-phosphate as a cofactor.

The enzyme catalyses O-phospho-L-serine + sulfite + H(+) = L-cysteate + phosphate. It participates in cofactor biosynthesis; coenzyme M biosynthesis. Specifically catalyzes the beta-elimination of phosphate from L-phosphoserine and the beta-addition of sulfite to the dehydroalanine intermediate to produce L-cysteate. The chain is Cysteate synthase from Methanoculleus marisnigri (strain ATCC 35101 / DSM 1498 / JR1).